A 486-amino-acid polypeptide reads, in one-letter code: Phosphomethylpyrimidine synthase (486 aa).

Residues Asn80, Met109, Tyr139, His175, 195–197, 236–239, and Glu275 each bind substrate; these read SRG and DSLR. His279 is a binding site for Zn(2+). A substrate-binding site is contributed by Tyr329. His370 provides a ligand contact to Zn(2+). Residues Cys450, Cys453, and Cys458 each contribute to the [4Fe-4S] cluster site.

This sequence belongs to the ThiC family. It depends on [4Fe-4S] cluster as a cofactor.

The enzyme catalyses 5-amino-1-(5-phospho-beta-D-ribosyl)imidazole + S-adenosyl-L-methionine = 4-amino-2-methyl-5-(phosphooxymethyl)pyrimidine + CO + 5'-deoxyadenosine + formate + L-methionine + 3 H(+). It functions in the pathway cofactor biosynthesis; thiamine diphosphate biosynthesis. Its function is as follows. Catalyzes the synthesis of the hydroxymethylpyrimidine phosphate (HMP-P) moiety of thiamine from aminoimidazole ribotide (AIR) in a radical S-adenosyl-L-methionine (SAM)-dependent reaction. This Trichodesmium erythraeum (strain IMS101) protein is Phosphomethylpyrimidine synthase.